A 203-amino-acid polypeptide reads, in one-letter code: A-type ATP synthase subunit E (203 aa).

The protein belongs to the V-ATPase E subunit family. Has multiple subunits with at least A(3), B(3), C, D, E, F, H, I and proteolipid K(x).

The protein resides in the cell membrane. In terms of biological role, component of the A-type ATP synthase that produces ATP from ADP in the presence of a proton gradient across the membrane. The protein is A-type ATP synthase subunit E of Thermococcus onnurineus (strain NA1).